We begin with the raw amino-acid sequence, 248 residues long: Coproheme decarboxylase (248 aa).

Fe-coproporphyrin III is bound by residues Arg130, 144-148 (YPMDK), His171, Gln184, and Ser222. Tyr144 is an active-site residue.

It belongs to the ChdC family. Type 1 subfamily. Requires Fe-coproporphyrin III as cofactor.

It catalyses the reaction Fe-coproporphyrin III + 2 H2O2 + 2 H(+) = heme b + 2 CO2 + 4 H2O. The catalysed reaction is Fe-coproporphyrin III + H2O2 + H(+) = harderoheme III + CO2 + 2 H2O. The enzyme catalyses harderoheme III + H2O2 + H(+) = heme b + CO2 + 2 H2O. It functions in the pathway porphyrin-containing compound metabolism; protoheme biosynthesis. Functionally, involved in coproporphyrin-dependent heme b biosynthesis. Catalyzes the decarboxylation of Fe-coproporphyrin III (coproheme) to heme b (protoheme IX), the last step of the pathway. The reaction occurs in a stepwise manner with a three-propionate intermediate. This is Coproheme decarboxylase from Geobacillus thermodenitrificans (strain NG80-2).